The following is a 628-amino-acid chain: Chaperone protein HtpG (628 aa).

The a; substrate-binding stretch occupies residues 1–334 (MTTTDTASET…SEDLPLNLSR (334 aa)). Residues 335 to 550 (EMLQNNPQLA…GFGPDRELEK (216 aa)) form a b region. Residues 551 to 628 (MLARANKGAA…LVLRGLVAHG (78 aa)) are c.

Belongs to the heat shock protein 90 family. Homodimer.

Its subcellular location is the cytoplasm. Functionally, molecular chaperone. Has ATPase activity. The protein is Chaperone protein HtpG of Rhodopseudomonas palustris (strain BisB5).